Consider the following 1066-residue polypeptide: Ribosomal protein S6 kinase delta-1 (1066 aa).

Residues 8-132 (SADLARFYTV…DFFKGGIIND (125 aa)) enclose the PX domain. The tract at residues 207–228 (VASDSEQSKTEEERESRSLFPG) is disordered. A compositionally biased stretch (basic and acidic residues) spans 212 to 223 (EQSKTEEERESR). One can recognise an MIT domain in the interval 277–305 (VQGESSPTRREAVKRRTAEYLMRAESISS). A phosphoserine mark is found at Ser-282, Ser-423, Ser-427, Ser-449, and Ser-455. Residues 344-445 (GVIDKVLLVM…PTLAKVHLQQ (102 aa)) enclose the Protein kinase 1 domain. The tract at residues 441–509 (VHLQQPTSSP…SGSSSEEECT (69 aa)) is disordered. Low complexity predominate over residues 448 to 458 (SSPQDSSSFES). Residues 474-483 (SSLTPSSQDD) are compositionally biased toward polar residues. A compositionally biased stretch (low complexity) spans 492 to 503 (DSSPKWPDSGSS). Ser-494, Ser-528, Ser-583, Ser-605, Ser-608, Ser-640, Ser-661, Ser-664, Ser-667, and Ser-794 each carry phosphoserine. The interval 553–596 (HLAADSDSPSTQLRAHELKFFPNDDPEAVSSPRTSDSLSRSKNS) is disordered. The segment covering 582-593 (SSPRTSDSLSRS) has biased composition (low complexity). Residues 794 to 1056 (SSDPKFQGLG…VEDIKSHPFF (263 aa)) form the Protein kinase 2 domain. ATP-binding positions include 801-809 (GLGVVESAV) and Arg-820. Residue Ser-872 is modified to Phosphoserine. Asp-929 functions as the Proton acceptor in the catalytic mechanism.

This sequence belongs to the protein kinase superfamily. Ser/Thr protein kinase family. S6 kinase subfamily. As to quaternary structure, interacts with SPHK1 and phosphatidylinositol 3-phosphate. Interacts (via PX domain) with PRDX3. Highly expressed in testis, skeletal muscle, brain, heart, placenta, kidney and liver and weakly expressed in thymus, small intestine, lung and colon.

Its subcellular location is the cytoplasm. The protein resides in the membrane. The protein localises to the early endosome. It carries out the reaction L-seryl-[protein] + ATP = O-phospho-L-seryl-[protein] + ADP + H(+). It catalyses the reaction L-threonyl-[protein] + ATP = O-phospho-L-threonyl-[protein] + ADP + H(+). In terms of biological role, may be involved in transmitting sphingosine-1 phosphate (SPP)-mediated signaling into the cell. Plays a role in the recruitment of PRDX3 to early endosomes. The protein is Ribosomal protein S6 kinase delta-1 (RPS6KC1) of Homo sapiens (Human).